The primary structure comprises 284 residues: RNase adapter protein RapZ (284 aa).

Residue 8–15 (GRSGSGKS) participates in ATP binding. 56–59 (DVRN) is a GTP binding site. The RNA-binding stretch occupies residues 266–284 (RSRGKNVQSRHRTLEKRKT).

It belongs to the RapZ-like family. RapZ subfamily. In terms of assembly, homotrimer.

Functionally, modulates the synthesis of GlmS, by affecting the processing and stability of the regulatory small RNA GlmZ. When glucosamine-6-phosphate (GlcN6P) concentrations are high in the cell, RapZ binds GlmZ and targets it to cleavage by RNase E. Consequently, GlmZ is inactivated and unable to activate GlmS synthesis. Under low GlcN6P concentrations, RapZ is sequestered and inactivated by an other regulatory small RNA, GlmY, preventing GlmZ degradation and leading to synthesis of GlmS. The protein is RNase adapter protein RapZ of Salmonella typhi.